We begin with the raw amino-acid sequence, 172 residues long: uncharacterized protein (172 aa).

A signal peptide spans 1-29 (MKKKQVMLALTAAAGLGLTALHSAPAAKA). SH3b domains are found at residues 42 to 105 (SDTY…MKTA) and 112 to 172 (KQTA…LQMR).

This is an uncharacterized protein from Bacillus subtilis (strain 168).